Reading from the N-terminus, the 180-residue chain is Adenosine 5'-phosphosulfate reductase (180 aa).

Positions 57, 58, 140, and 143 each coordinate [4Fe-4S] cluster. The Nucleophile; cysteine thiosulfonate intermediate role is filled by Cys168.

It belongs to the PAPS reductase family. CysH subfamily. [4Fe-4S] cluster is required as a cofactor.

The protein localises to the cytoplasm. It catalyses the reaction [thioredoxin]-disulfide + sulfite + AMP + 2 H(+) = adenosine 5'-phosphosulfate + [thioredoxin]-dithiol. Its pathway is sulfur metabolism; hydrogen sulfide biosynthesis; sulfite from sulfate. In terms of biological role, catalyzes the formation of sulfite from adenosine 5'-phosphosulfate (APS) using thioredoxin as an electron donor. The protein is Adenosine 5'-phosphosulfate reductase of Rhizobium tropici.